Consider the following 624-residue polypeptide: Leucine-rich repeat and IQ domain-containing protein 3 (624 aa).

3 LRR repeats span residues 51–72, 73–94, and 98–119; these read SLRV…QSCI, KLIK…KFWN, and NLKL…CVLS. One can recognise an LRRCT domain in the interval 132 to 179; the sequence is CPVSLKKGYRHVLVNSIWPLKALDHHVISDEEIIQNWHLPERFKACNH. Positions 215 to 244 constitute an IQ domain; that stretch reads HNSPVLIVQRWIRGFLVRKNLSPVFFHKKK. Positions 553–614 form a coiled coil; that stretch reads KQKLKAEKYR…TKVAIVKTNL (62 aa).

The sequence is that of Leucine-rich repeat and IQ domain-containing protein 3 (LRRIQ3) from Homo sapiens (Human).